The sequence spans 225 residues: MAKGFNVAIDGPAGAGKSTVAKKTAEKLGFLYIDTGAMYRAITFAALAEGIDLHDGKALGKLLEKSELRLESSNEGTAVFWNGADITAAIRTNEVNSNVSLVASHREVREGMTAMQQELAKSKNAVLDGRDIGTHVLPDANVKVFLTASVEERARRRHLEQLEKGLPSDFEQLKKDIAKRDELDSTRAIAPLKQAADAQVVDTTSMGIDEVVETILDLVKEHSRQ.

11–19 contacts ATP; sequence GPAGAGKST.

Belongs to the cytidylate kinase family. Type 1 subfamily.

The protein localises to the cytoplasm. It catalyses the reaction CMP + ATP = CDP + ADP. The catalysed reaction is dCMP + ATP = dCDP + ADP. The polypeptide is Cytidylate kinase (Shouchella clausii (strain KSM-K16) (Alkalihalobacillus clausii)).